Here is a 131-residue protein sequence, read N- to C-terminus: Small ribosomal subunit protein bS6 (131 aa).

Residues Glu-98–Glu-131 are disordered. Over residues Lys-104–Phe-116 the composition is skewed to basic and acidic residues. Residues Thr-120–Glu-131 show a composition bias toward acidic residues.

Belongs to the bacterial ribosomal protein bS6 family.

Its function is as follows. Binds together with bS18 to 16S ribosomal RNA. The polypeptide is Small ribosomal subunit protein bS6 (Edwardsiella ictaluri (strain 93-146)).